A 445-amino-acid polypeptide reads, in one-letter code: Phosphoglucosamine mutase (445 aa).

Residue Ser-102 is the Phosphoserine intermediate of the active site. Ser-102, Asp-241, Asp-243, and Asp-245 together coordinate Mg(2+). Ser-102 is subject to Phosphoserine.

It belongs to the phosphohexose mutase family. It depends on Mg(2+) as a cofactor. Activated by phosphorylation.

The enzyme catalyses alpha-D-glucosamine 1-phosphate = D-glucosamine 6-phosphate. Functionally, catalyzes the conversion of glucosamine-6-phosphate to glucosamine-1-phosphate. This Enterobacter sp. (strain 638) protein is Phosphoglucosamine mutase.